A 423-amino-acid chain; its full sequence is UPF0229 protein PLES_05841 (423 aa).

The interval 84–107 (AGEHIARPSGGGGGRGGGKASNSG) is disordered. Residues 92-102 (SGGGGGRGGGK) show a composition bias toward gly residues.

The protein belongs to the UPF0229 family.

The sequence is that of UPF0229 protein PLES_05841 from Pseudomonas aeruginosa (strain LESB58).